The chain runs to 163 residues: NADH-quinone oxidoreductase subunit I (163 aa).

4Fe-4S ferredoxin-type domains are found at residues 53-83 (LRRYPNGEERCIACKLCEAICPAQAITIEAG) and 94-123 (VRYDIDMVKCIYCGFCQEACPVDAIVEGPN). [4Fe-4S] cluster contacts are provided by Cys63, Cys66, Cys69, Cys73, Cys103, Cys106, Cys109, and Cys113.

The protein belongs to the complex I 23 kDa subunit family. NDH-1 is composed of 14 different subunits. Subunits NuoA, H, J, K, L, M, N constitute the membrane sector of the complex. It depends on [4Fe-4S] cluster as a cofactor.

The protein resides in the cell inner membrane. It carries out the reaction a quinone + NADH + 5 H(+)(in) = a quinol + NAD(+) + 4 H(+)(out). NDH-1 shuttles electrons from NADH, via FMN and iron-sulfur (Fe-S) centers, to quinones in the respiratory chain. The immediate electron acceptor for the enzyme in this species is believed to be ubiquinone. Couples the redox reaction to proton translocation (for every two electrons transferred, four hydrogen ions are translocated across the cytoplasmic membrane), and thus conserves the redox energy in a proton gradient. The chain is NADH-quinone oxidoreductase subunit I from Chelativorans sp. (strain BNC1).